The chain runs to 645 residues: Acetyl-coenzyme A synthetase 2 (645 aa).

Residues Arg190 to Lys193, Thr308, and Asn332 contribute to the CoA site. ATP is bound by residues Gly384–Pro386, Asp408–Thr413, Asp497, and Arg512. Ser520 serves as a coordination point for CoA. Arg523 serves as a coordination point for ATP. Mg(2+) is bound by residues Val534, His536, and Val539. Lys606 carries the N6-acetyllysine modification.

The protein belongs to the ATP-dependent AMP-binding enzyme family. Mg(2+) is required as a cofactor. Acetylated. Deacetylation by the SIR2-homolog deacetylase activates the enzyme.

The enzyme catalyses acetate + ATP + CoA = acetyl-CoA + AMP + diphosphate. In terms of biological role, catalyzes the conversion of acetate into acetyl-CoA (AcCoA), an essential intermediate at the junction of anabolic and catabolic pathways. AcsA undergoes a two-step reaction. In the first half reaction, AcsA combines acetate with ATP to form acetyl-adenylate (AcAMP) intermediate. In the second half reaction, it can then transfer the acetyl group from AcAMP to the sulfhydryl group of CoA, forming the product AcCoA. This Pseudomonas aeruginosa (strain ATCC 15692 / DSM 22644 / CIP 104116 / JCM 14847 / LMG 12228 / 1C / PRS 101 / PAO1) protein is Acetyl-coenzyme A synthetase 2.